The sequence spans 185 residues: Crossover junction endodeoxyribonuclease RuvC (185 aa).

Catalysis depends on residues Asp7, Glu68, and Asp141. Residues Asp7, Glu68, and Asp141 each coordinate Mg(2+).

The protein belongs to the RuvC family. As to quaternary structure, homodimer which binds Holliday junction (HJ) DNA. The HJ becomes 2-fold symmetrical on binding to RuvC with unstacked arms; it has a different conformation from HJ DNA in complex with RuvA. In the full resolvosome a probable DNA-RuvA(4)-RuvB(12)-RuvC(2) complex forms which resolves the HJ. Mg(2+) serves as cofactor.

It localises to the cytoplasm. The enzyme catalyses Endonucleolytic cleavage at a junction such as a reciprocal single-stranded crossover between two homologous DNA duplexes (Holliday junction).. Its function is as follows. The RuvA-RuvB-RuvC complex processes Holliday junction (HJ) DNA during genetic recombination and DNA repair. Endonuclease that resolves HJ intermediates. Cleaves cruciform DNA by making single-stranded nicks across the HJ at symmetrical positions within the homologous arms, yielding a 5'-phosphate and a 3'-hydroxyl group; requires a central core of homology in the junction. The consensus cleavage sequence is 5'-(A/T)TT(C/G)-3'. Cleavage occurs on the 3'-side of the TT dinucleotide at the point of strand exchange. HJ branch migration catalyzed by RuvA-RuvB allows RuvC to scan DNA until it finds its consensus sequence, where it cleaves and resolves the cruciform DNA. This chain is Crossover junction endodeoxyribonuclease RuvC, found in Helicobacter hepaticus (strain ATCC 51449 / 3B1).